Here is a 418-residue protein sequence, read N- to C-terminus: Tyrosine--tRNA ligase (418 aa).

Residue Y34 participates in L-tyrosine binding. Residues 39–48 (PTADSLHLGH) carry the 'HIGH' region motif. The L-tyrosine site is built by Y169 and Q173. The 'KMSKS' region motif lies at 229–233 (KFGKS). K232 provides a ligand contact to ATP. The region spanning 352-418 (NNIVELLVSS…GKKKYFVLTY (67 aa)) is the S4 RNA-binding domain.

Belongs to the class-I aminoacyl-tRNA synthetase family. TyrS type 1 subfamily. As to quaternary structure, homodimer.

Its subcellular location is the cytoplasm. It carries out the reaction tRNA(Tyr) + L-tyrosine + ATP = L-tyrosyl-tRNA(Tyr) + AMP + diphosphate + H(+). In terms of biological role, catalyzes the attachment of tyrosine to tRNA(Tyr) in a two-step reaction: tyrosine is first activated by ATP to form Tyr-AMP and then transferred to the acceptor end of tRNA(Tyr). The sequence is that of Tyrosine--tRNA ligase from Streptococcus pneumoniae (strain Taiwan19F-14).